The primary structure comprises 570 residues: Sulfite reductase [NADPH] hemoprotein beta-component (570 aa).

[4Fe-4S] cluster is bound by residues Cys-434, Cys-440, Cys-479, and Cys-483. Cys-483 is a siroheme binding site.

This sequence belongs to the nitrite and sulfite reductase 4Fe-4S domain family. In terms of assembly, alpha(8)-beta(8). The alpha component is a flavoprotein, the beta component is a hemoprotein. Siroheme is required as a cofactor. It depends on [4Fe-4S] cluster as a cofactor.

The enzyme catalyses hydrogen sulfide + 3 NADP(+) + 3 H2O = sulfite + 3 NADPH + 4 H(+). The protein operates within sulfur metabolism; hydrogen sulfide biosynthesis; hydrogen sulfide from sulfite (NADPH route): step 1/1. Its function is as follows. Component of the sulfite reductase complex that catalyzes the 6-electron reduction of sulfite to sulfide. This is one of several activities required for the biosynthesis of L-cysteine from sulfate. The sequence is that of Sulfite reductase [NADPH] hemoprotein beta-component from Escherichia coli O6:H1 (strain CFT073 / ATCC 700928 / UPEC).